A 378-amino-acid chain; its full sequence is Protein RecA (378 aa).

65-72 (GPESSGKT) provides a ligand contact to ATP. Residues 325–378 (AYGMDQTGEEDDQADDKSKDKATKPSDKSQAQAKPKKPVATETSLDLDDSKTDK) form a disordered region. The span at 339–351 (DDKSKDKATKPSD) shows a compositional bias: basic and acidic residues.

This sequence belongs to the RecA family.

The protein localises to the cytoplasm. Functionally, can catalyze the hydrolysis of ATP in the presence of single-stranded DNA, the ATP-dependent uptake of single-stranded DNA by duplex DNA, and the ATP-dependent hybridization of homologous single-stranded DNAs. It interacts with LexA causing its activation and leading to its autocatalytic cleavage. This Lactiplantibacillus pentosus (Lactobacillus pentosus) protein is Protein RecA.